Consider the following 628-residue polypeptide: Nuclear RNA export factor 1 (628 aa).

The tract at residues 47 to 83 (DTQSRYEDDDEPAVPVRASLTSASSRGRGGSSRGFGQ) is disordered. Low complexity predominate over residues 63 to 72 (RASLTSASSR). The RRM domain occupies 100-179 (YKCRATGAAK…EFYTSKVPAP (80 aa)). LRR repeat units lie at residues 245-270 (NIVA…SIAK) and 271-294 (FVME…FAGL). One can recognise an NTF2 domain in the interval 365-526 (LVEQFVTSYF…VAVISDQLFI (162 aa)). A TAP-C domain is found at 576-628 (PIREEMIKAMCQFSGMIPPFSEKCLADCAWNFDFACQKFNEIKSSVPAEAFAH).

The protein belongs to the NXF family. Interacts with nucleoporins, Nup98, Nup153 and Nup214.

Its subcellular location is the nucleus. In terms of biological role, involved in RNA export from the nucleus to the cytoplasm. This Caenorhabditis elegans protein is Nuclear RNA export factor 1 (nxf-1).